Here is a 240-residue protein sequence, read N- to C-terminus: Transposase for insertion sequence element IS3411 (240 aa).

Residues valine 125–arginine 240 form the Integrase catalytic domain.

Its function is as follows. Involved in the transposition of the insertion sequence. The sequence is that of Transposase for insertion sequence element IS3411 from Escherichia coli.